Here is a 356-residue protein sequence, read N- to C-terminus: UDP-N-acetylglucosamine--N-acetylmuramyl-(pentapeptide) pyrophosphoryl-undecaprenol N-acetylglucosamine transferase (356 aa).

Residues 11-13 (TGG), Asn122, Ser186, and Gln287 contribute to the UDP-N-acetyl-alpha-D-glucosamine site.

Belongs to the glycosyltransferase 28 family. MurG subfamily.

It localises to the cell inner membrane. It carries out the reaction di-trans,octa-cis-undecaprenyl diphospho-N-acetyl-alpha-D-muramoyl-L-alanyl-D-glutamyl-meso-2,6-diaminopimeloyl-D-alanyl-D-alanine + UDP-N-acetyl-alpha-D-glucosamine = di-trans,octa-cis-undecaprenyl diphospho-[N-acetyl-alpha-D-glucosaminyl-(1-&gt;4)]-N-acetyl-alpha-D-muramoyl-L-alanyl-D-glutamyl-meso-2,6-diaminopimeloyl-D-alanyl-D-alanine + UDP + H(+). It functions in the pathway cell wall biogenesis; peptidoglycan biosynthesis. Cell wall formation. Catalyzes the transfer of a GlcNAc subunit on undecaprenyl-pyrophosphoryl-MurNAc-pentapeptide (lipid intermediate I) to form undecaprenyl-pyrophosphoryl-MurNAc-(pentapeptide)GlcNAc (lipid intermediate II). This chain is UDP-N-acetylglucosamine--N-acetylmuramyl-(pentapeptide) pyrophosphoryl-undecaprenol N-acetylglucosamine transferase, found in Anaplasma marginale (strain St. Maries).